The sequence spans 155 residues: Small ribosomal subunit protein uS7c (155 aa).

The protein belongs to the universal ribosomal protein uS7 family. In terms of assembly, part of the 30S ribosomal subunit.

The protein resides in the plastid. The protein localises to the chloroplast. Functionally, one of the primary rRNA binding proteins, it binds directly to 16S rRNA where it nucleates assembly of the head domain of the 30S subunit. The sequence is that of Small ribosomal subunit protein uS7c (rps7) from Lilium superbum (Turk's cap lily).